The primary structure comprises 175 residues: Vesicle-associated membrane protein-associated protein SCS22 (175 aa).

The 125-residue stretch at 1–125 (MRIVPEKLVF…DDIVFKKIKI (125 aa)) folds into the MSP domain. At 1–154 (MRIVPEKLVF…RAPSAGNGQS (154 aa)) the chain is on the cytoplasmic side. The interval 133–152 (RKPSGNHDAESARAPSAGNG) is disordered. A helical; Anchor for type IV membrane protein membrane pass occupies residues 155–175 (LSSRALLIITVIALLVGWIYY).

This sequence belongs to the VAMP-associated protein (VAP) (TC 9.B.17) family.

The protein localises to the membrane. Targets proteins containing a FFAT motif to membranes. Involved in regulation of phospholipid metabolism. The protein is Vesicle-associated membrane protein-associated protein SCS22 (SCS22) of Saccharomyces cerevisiae (strain ATCC 204508 / S288c) (Baker's yeast).